A 35-amino-acid polypeptide reads, in one-letter code: Sorbin and SH3 domain-containing protein 1 (35 aa).

Residues 1–8 (LNRDDDSD) form the SoHo domain. Ser-15 is modified (phosphoserine). Residues 22 to 35 (CDDGWFVGTSRRTK) enclose the SH3 domain.

Interacts with the long isoform of AFDN and with VCL. AFDN and VCL bind to SORBS1 in a competitive manner and do not form a ternary complex. Interacts with ABL1, CBL, CBLB and INPPL1/SHIP2 through the third SH3 domain. Interaction with ABL1 occurs only after insulin stimulation while this has no effect on the interaction with INPPL1. Interacts with the insulin receptor but dissociates from it following insulin stimulation. Also interacts with SCA7, PTK2/FAK1 and flotillin. Interacts (via SH3 domain 2) with PXN. Interacts (via third SH3 domain) with the Ten-1 ICD form of TENM1; the interaction induces the translocation of SORBS1 to the nucleus. Post-translationally, O-glycosylated.

It localises to the cell junction. It is found in the adherens junction. The protein resides in the cell membrane. Its subcellular location is the cytoplasm. The protein localises to the cytoskeleton. It localises to the focal adhesion. It is found in the nucleus. The protein resides in the nucleus matrix. Plays a role in tyrosine phosphorylation of CBL by linking CBL to the insulin receptor. Required for insulin-stimulated glucose transport. Involved in formation of actin stress fibers and focal adhesions. The chain is Sorbin and SH3 domain-containing protein 1 from Rattus norvegicus (Rat).